The chain runs to 207 residues: Probable HTH-type transcriptional regulator YttP (207 aa).

The region spanning Val3–Tyr63 is the HTH tetR-type domain. Positions Ser26–Phe45 form a DNA-binding region, H-T-H motif.

In Bacillus subtilis (strain 168), this protein is Probable HTH-type transcriptional regulator YttP (yttP).